Consider the following 399-residue polypeptide: Type II secretion system protein L (399 aa).

At Met1–Pro247 the chain is on the cytoplasmic side. A helical transmembrane segment spans residues Trp248–Gly264. The Periplasmic portion of the chain corresponds to Glu265–Pro399.

It belongs to the GSP L family. In terms of assembly, type II secretion system is composed of four main components: the outer membrane complex, the inner membrane complex, the cytoplasmic secretion ATPase and the periplasm-spanning pseudopilus. Forms homodimers. Interacts with OutM/GspM. Interacts with OutE/GspE and OutF/GspF.

It localises to the cell inner membrane. In terms of biological role, inner membrane component of the type II secretion system required for the energy-dependent secretion of extracellular factors such as proteases and toxins from the periplasm. Plays a role in the complex assembly and recruits OutM resulting in a stable complex in the inner membrane. Provides thus a link between the energy-providing OutE protein in the cytoplasm and the rest of the T2SS machinery. The protein is Type II secretion system protein L (outL) of Dickeya chrysanthemi (Pectobacterium chrysanthemi).